Here is an 85-residue protein sequence, read N- to C-terminus: Toxin BmKaIT1 (85 aa).

The first 19 residues, 1-19, serve as a signal peptide directing secretion; it reads MNYLVMISFAFLLMTGVES. The region spanning 21–83 is the LCN-type CS-alpha/beta domain; the sequence is RDAYIAQNYN…VPIRVPGKCH (63 aa). 4 disulfide bridges follow: Cys31–Cys82, Cys35–Cys55, Cys41–Cys65, and Cys45–Cys67. The propeptide at 84–85 is removed by a carboxypeptidase; it reads RR.

The protein belongs to the long (4 C-C) scorpion toxin superfamily. Sodium channel inhibitor family. Alpha subfamily. Expressed by the venom gland.

The protein localises to the secreted. In terms of biological role, alpha toxins bind voltage-independently at site-3 of sodium channels (Nav) and inhibit the inactivation of the activated channels, thereby blocking neuronal transmission. Shows a high toxicity toward insects and moderate toxicity against mammals. The protein is Toxin BmKaIT1 of Olivierus martensii (Manchurian scorpion).